The primary structure comprises 199 residues: ATP-dependent Clp protease proteolytic subunit (199 aa).

S103 functions as the Nucleophile in the catalytic mechanism. H128 is a catalytic residue.

This sequence belongs to the peptidase S14 family. As to quaternary structure, fourteen ClpP subunits assemble into 2 heptameric rings which stack back to back to give a disk-like structure with a central cavity, resembling the structure of eukaryotic proteasomes.

It is found in the cytoplasm. The catalysed reaction is Hydrolysis of proteins to small peptides in the presence of ATP and magnesium. alpha-casein is the usual test substrate. In the absence of ATP, only oligopeptides shorter than five residues are hydrolyzed (such as succinyl-Leu-Tyr-|-NHMec, and Leu-Tyr-Leu-|-Tyr-Trp, in which cleavage of the -Tyr-|-Leu- and -Tyr-|-Trp bonds also occurs).. Its function is as follows. Cleaves peptides in various proteins in a process that requires ATP hydrolysis. Has a chymotrypsin-like activity. Plays a major role in the degradation of misfolded proteins. The sequence is that of ATP-dependent Clp protease proteolytic subunit from Photobacterium profundum (strain SS9).